A 197-amino-acid chain; its full sequence is Glycerol-3-phosphate acyltransferase (197 aa).

Helical transmembrane passes span 1–21 (MNIL…GFLI), 50–70 (WPAL…VKIA), 77–97 (GLIE…PIWL), 111–131 (MFLA…LIVL), 136–156 (FVSL…FFYL), and 157–177 (GNYM…VIWK).

It belongs to the PlsY family. Probably interacts with PlsX.

The protein resides in the cell inner membrane. It catalyses the reaction an acyl phosphate + sn-glycerol 3-phosphate = a 1-acyl-sn-glycero-3-phosphate + phosphate. It participates in lipid metabolism; phospholipid metabolism. Its function is as follows. Catalyzes the transfer of an acyl group from acyl-phosphate (acyl-PO(4)) to glycerol-3-phosphate (G3P) to form lysophosphatidic acid (LPA). This enzyme utilizes acyl-phosphate as fatty acyl donor, but not acyl-CoA or acyl-ACP. In Prochlorococcus marinus (strain MIT 9312), this protein is Glycerol-3-phosphate acyltransferase.